Consider the following 557-residue polypeptide: Formate--tetrahydrofolate ligase (557 aa).

65-72 (TPAGEGKT) contacts ATP.

The protein belongs to the formate--tetrahydrofolate ligase family.

The catalysed reaction is (6S)-5,6,7,8-tetrahydrofolate + formate + ATP = (6R)-10-formyltetrahydrofolate + ADP + phosphate. Its pathway is one-carbon metabolism; tetrahydrofolate interconversion. The polypeptide is Formate--tetrahydrofolate ligase (Methylorubrum populi (strain ATCC BAA-705 / NCIMB 13946 / BJ001) (Methylobacterium populi)).